Reading from the N-terminus, the 482-residue chain is tRNA sulfurtransferase (482 aa).

The 105-residue stretch at 61–165 (NQVLTAVTHT…NEKLNLVIAR (105 aa)) folds into the THUMP domain. Residues 183–184 (LI), Lys-265, Gly-287, and Gln-296 contribute to the ATP site. A disulfide bridge links Cys-344 with Cys-456. In terms of domain architecture, Rhodanese spans 404-482 (LGSDVVVLDI…GYKNVKVYRP (79 aa)). Cys-456 serves as the catalytic Cysteine persulfide intermediate.

The protein belongs to the ThiI family.

Its subcellular location is the cytoplasm. It carries out the reaction [ThiI sulfur-carrier protein]-S-sulfanyl-L-cysteine + a uridine in tRNA + 2 reduced [2Fe-2S]-[ferredoxin] + ATP + H(+) = [ThiI sulfur-carrier protein]-L-cysteine + a 4-thiouridine in tRNA + 2 oxidized [2Fe-2S]-[ferredoxin] + AMP + diphosphate. The catalysed reaction is [ThiS sulfur-carrier protein]-C-terminal Gly-Gly-AMP + S-sulfanyl-L-cysteinyl-[cysteine desulfurase] + AH2 = [ThiS sulfur-carrier protein]-C-terminal-Gly-aminoethanethioate + L-cysteinyl-[cysteine desulfurase] + A + AMP + 2 H(+). It functions in the pathway cofactor biosynthesis; thiamine diphosphate biosynthesis. Functionally, catalyzes the ATP-dependent transfer of a sulfur to tRNA to produce 4-thiouridine in position 8 of tRNAs, which functions as a near-UV photosensor. Also catalyzes the transfer of sulfur to the sulfur carrier protein ThiS, forming ThiS-thiocarboxylate. This is a step in the synthesis of thiazole, in the thiamine biosynthesis pathway. The sulfur is donated as persulfide by IscS. The protein is tRNA sulfurtransferase of Aliivibrio salmonicida (strain LFI1238) (Vibrio salmonicida (strain LFI1238)).